The chain runs to 516 residues: 3-phosphoshikimate 1-carboxyvinyltransferase, chloroplastic (516 aa).

The N-terminal 72 residues, 1-72 (MAQINNMAQG…RISASVATAQ (72 aa)), are a transit peptide targeting the chloroplast. The 3-phosphoshikimate site is built by lysine 95, serine 96, and arginine 100. Lysine 95 provides a ligand contact to phosphoenolpyruvate. The phosphoenolpyruvate site is built by glycine 173 and arginine 203. Residues serine 250, serine 251, glutamine 252, serine 278, aspartate 403, and lysine 430 each coordinate 3-phosphoshikimate. Glutamine 252 contributes to the phosphoenolpyruvate binding site. The active-site Proton acceptor is aspartate 403. Residues arginine 434, arginine 476, and lysine 501 each contribute to the phosphoenolpyruvate site.

It belongs to the EPSP synthase family. In terms of tissue distribution, mostly expressed in flower petals, and, to a lower extent, in roots, stems and anthers, but barely in leaves.

The protein localises to the plastid. Its subcellular location is the chloroplast. It catalyses the reaction 3-phosphoshikimate + phosphoenolpyruvate = 5-O-(1-carboxyvinyl)-3-phosphoshikimate + phosphate. It participates in metabolic intermediate biosynthesis; chorismate biosynthesis; chorismate from D-erythrose 4-phosphate and phosphoenolpyruvate: step 6/7. Its activity is regulated as follows. Competitively inhibited by glyphosate. Functionally, catalyzes the transfer of the enolpyruvyl moiety of phosphoenolpyruvate (PEP) to the 5-hydroxyl of shikimate-3-phosphate (S3P) to produce enolpyruvyl shikimate-3-phosphate and inorganic phosphate. Involved in the accumulation of volatile benzoides in flowers, scent attracting pollinators (e.g. the night-active hawkmoth pollinator Manduca sexta). This is 3-phosphoshikimate 1-carboxyvinyltransferase, chloroplastic from Petunia hybrida (Petunia).